We begin with the raw amino-acid sequence, 193 residues long: Large ribosomal subunit protein bL9 (193 aa).

The segment at 155–193 is disordered; sequence AEGETLTSAEAIYDIQEKPLAENQEEMNDNDANSINEQA. The segment covering 184–193 has biased composition (polar residues); it reads NDANSINEQA.

The protein belongs to the bacterial ribosomal protein bL9 family.

Its function is as follows. Binds to the 23S rRNA. The polypeptide is Large ribosomal subunit protein bL9 (Bartonella quintana (strain Toulouse) (Rochalimaea quintana)).